A 458-amino-acid polypeptide reads, in one-letter code: Transcription factor PCF5 (458 aa).

Disordered stretches follow at residues 1 to 103 (MGDA…RGPR), 159 to 182 (GAGA…ENSD), 278 to 299 (MFHH…TTQQ), and 424 to 458 (RLPA…ASHH). Gly residues predominate over residues 65–74 (RGGGGGGGGE). A TCP domain is found at 89–147 (RKDRHSKVCTARGPRDRRVRLSAHTAIQFYDVQDRLGYDRPSKAVDWLIKNAKDAIDKL).

Forms homodimers and heterodimers.

The protein resides in the nucleus. Transcription activator. Binds the promoter core sequence 5'-GGNCC-3'. The polypeptide is Transcription factor PCF5 (PCF5) (Oryza sativa subsp. japonica (Rice)).